The following is a 93-amino-acid chain: Cell division protein CrgA (93 aa).

2 helical membrane passes run 31–51 (VWFV…LMVF) and 70–90 (LGPW…LLTM).

It belongs to the CrgA family.

It localises to the cell membrane. Involved in cell division. This chain is Cell division protein CrgA, found in Mycobacterium leprae (strain Br4923).